A 346-amino-acid chain; its full sequence is Small ribosomal subunit biogenesis GTPase RsgA (346 aa).

The CP-type G domain maps to 98 to 261; the sequence is VQGGRGPQLA…VIDTPGMRTL (164 aa). GTP-binding positions include 148–151 and 200–208; these read TKAD and GSSGVGKST. Residues Cys-284, Cys-289, His-291, and Cys-297 each coordinate Zn(2+). A disordered region spans residues 317–346; sequence RKLSDENQHNTPVQSGPRGAKSPAGRGKRR.

The protein belongs to the TRAFAC class YlqF/YawG GTPase family. RsgA subfamily. As to quaternary structure, monomer. Associates with 30S ribosomal subunit, binds 16S rRNA. Zn(2+) serves as cofactor.

It localises to the cytoplasm. Functionally, one of several proteins that assist in the late maturation steps of the functional core of the 30S ribosomal subunit. Helps release RbfA from mature subunits. May play a role in the assembly of ribosomal proteins into the subunit. Circularly permuted GTPase that catalyzes slow GTP hydrolysis, GTPase activity is stimulated by the 30S ribosomal subunit. This is Small ribosomal subunit biogenesis GTPase RsgA from Mesorhizobium japonicum (strain LMG 29417 / CECT 9101 / MAFF 303099) (Mesorhizobium loti (strain MAFF 303099)).